A 389-amino-acid chain; its full sequence is Phospho-N-acetylmuramoyl-pentapeptide-transferase (389 aa).

Helical transmembrane passes span R25–I45, T73–L93, F97–Y117, F135–A155, I190–A210, G222–M242, G258–W278, V286–I306, I311–V331, and Q366–L386.

This sequence belongs to the glycosyltransferase 4 family. MraY subfamily. It depends on Mg(2+) as a cofactor.

The protein resides in the cell inner membrane. The enzyme catalyses UDP-N-acetyl-alpha-D-muramoyl-L-alanyl-gamma-D-glutamyl-meso-2,6-diaminopimeloyl-D-alanyl-D-alanine + di-trans,octa-cis-undecaprenyl phosphate = di-trans,octa-cis-undecaprenyl diphospho-N-acetyl-alpha-D-muramoyl-L-alanyl-D-glutamyl-meso-2,6-diaminopimeloyl-D-alanyl-D-alanine + UMP. It participates in cell wall biogenesis; peptidoglycan biosynthesis. Its function is as follows. Catalyzes the initial step of the lipid cycle reactions in the biosynthesis of the cell wall peptidoglycan: transfers peptidoglycan precursor phospho-MurNAc-pentapeptide from UDP-MurNAc-pentapeptide onto the lipid carrier undecaprenyl phosphate, yielding undecaprenyl-pyrophosphoryl-MurNAc-pentapeptide, known as lipid I. This Burkholderia vietnamiensis (strain G4 / LMG 22486) (Burkholderia cepacia (strain R1808)) protein is Phospho-N-acetylmuramoyl-pentapeptide-transferase.